Reading from the N-terminus, the 610-residue chain is MSNVFDSKSFLKTVTSQPGVYRMYDAGGTVIYVGKAKDLKKRLSSYFRGNLGSRKTEALVALIEQIDVTVTHTETEALLLEHNYIKLYQPRYNVLLRDDKSYPYIFLSADHHPRLASHRGAKHAKGEYFGPFPNGYAVRETLSLLQKIFPVRQCENSVYRNRSRPCLQYQIGRCLGPCVEGLVTEEEYARQIDYVRLFLSGKDDQVLNQLVARMEQASGDLRFEEAGRLRDQIQAVRRVTEKQFVSNQGDDMDVIGVSFDSGMACLHVLFIRQGKVLGSRSYFPKVPGGTELAEVVQTFVGQFYLQGSQARTLPSDILIDFTLPEKDLLAASLTALSGRRVSIQSKPRGDRARYLKLARTNAATALITRLAQHSTIHQRLAALAQTLKLPAIGRMECFDISHTMGEQTVASCVVFDANGPLRSEYRRYNISGITPGDDYAAMNQVLRRRYGKAIEESKIPDVIVIDGGKGQLAQAKEVFAQLDVTWDKSHPLLLGVAKGTDRKAGLETLFLEPEGEGFSLPPDSPALHVIQHIRDDSHNHAITGHRNKRAKVKNTSALETIEGIGPKRRQMLLKYMGGLQPLINASKEEIARVPGISTALAEKIFYALKH.

Positions 16 to 94 (SQPGVYRMYD…IKLYQPRYNV (79 aa)) constitute a GIY-YIG domain. The UVR domain maps to 204–239 (DQVLNQLVARMEQASGDLRFEEAGRLRDQIQAVRRV).

Belongs to the UvrC family. In terms of assembly, interacts with UvrB in an incision complex.

Its subcellular location is the cytoplasm. Its function is as follows. The UvrABC repair system catalyzes the recognition and processing of DNA lesions. UvrC both incises the 5' and 3' sides of the lesion. The N-terminal half is responsible for the 3' incision and the C-terminal half is responsible for the 5' incision. This chain is UvrABC system protein C, found in Erwinia tasmaniensis (strain DSM 17950 / CFBP 7177 / CIP 109463 / NCPPB 4357 / Et1/99).